We begin with the raw amino-acid sequence, 219 residues long: Phosphate-specific transport system accessory protein PhoU homolog (219 aa).

The protein belongs to the PhoU family. Homodimer.

The protein localises to the cytoplasm. Plays a role in the regulation of phosphate uptake. Encoded together with proteins of the phosphate-specific transport (Pst) system in the polycistronic pstSCAB-phoU operon. In Clostridium acetobutylicum (strain ATCC 824 / DSM 792 / JCM 1419 / IAM 19013 / LMG 5710 / NBRC 13948 / NRRL B-527 / VKM B-1787 / 2291 / W), this protein is Phosphate-specific transport system accessory protein PhoU homolog.